A 417-amino-acid polypeptide reads, in one-letter code: MNTDIANQLRVAKKATTDLNLIQSDTRTIILKTLAANLEKHIENIIQENQKDLSLMLEQDPRYDRLLLNKERILSLANDVRKVASLPNPLGVNLLEKSMPNGLSIKKITVPLGVIAVIYESRPNVTIDIFSLCFKSGNVCILKGGKEAHFTNSYLLLLIKNTLKNFNINTDIVCLLPPERALITPLLNATGLVDLCIPRGSQNLINFVRDNAKIPVIETGAGIVHTYFDKSGDLEKGKKIINNAKTRRVSVCNALDTLIIHADRLKDLPELVETLSQKNVIIYADQDAYQVLDKNYPEQLLMKAKPQDFGHEFLDYKLAIKTVPNIKAAIDHIQQFSSYHSEAVIAEDESAIDKFLTEVDAAAVYANASTAFTDGGEFGLGAEIGISTQKVHARGPMGLEALTSYKWVIRGTGQIRD.

This sequence belongs to the gamma-glutamyl phosphate reductase family.

It localises to the cytoplasm. It catalyses the reaction L-glutamate 5-semialdehyde + phosphate + NADP(+) = L-glutamyl 5-phosphate + NADPH + H(+). Its pathway is amino-acid biosynthesis; L-proline biosynthesis; L-glutamate 5-semialdehyde from L-glutamate: step 2/2. Catalyzes the NADPH-dependent reduction of L-glutamate 5-phosphate into L-glutamate 5-semialdehyde and phosphate. The product spontaneously undergoes cyclization to form 1-pyrroline-5-carboxylate. The polypeptide is Gamma-glutamyl phosphate reductase (Legionella pneumophila (strain Paris)).